We begin with the raw amino-acid sequence, 54 residues long: ATP synthase protein 8 (54 aa).

A helical membrane pass occupies residues 9–25 (WVFLFFLVWLVLGFLGL).

It belongs to the ATPase protein 8 family. In terms of assembly, F-type ATPases have 2 components, CF(1) - the catalytic core - and CF(0) - the membrane proton channel.

The protein localises to the mitochondrion membrane. Mitochondrial membrane ATP synthase (F(1)F(0) ATP synthase or Complex V) produces ATP from ADP in the presence of a proton gradient across the membrane which is generated by electron transport complexes of the respiratory chain. F-type ATPases consist of two structural domains, F(1) - containing the extramembraneous catalytic core and F(0) - containing the membrane proton channel, linked together by a central stalk and a peripheral stalk. During catalysis, ATP synthesis in the catalytic domain of F(1) is coupled via a rotary mechanism of the central stalk subunits to proton translocation. Part of the complex F(0) domain. Minor subunit located with subunit a in the membrane. In Branchiostoma floridae (Florida lancelet), this protein is ATP synthase protein 8 (MTATP8).